We begin with the raw amino-acid sequence, 1097 residues long: RecBCD enzyme subunit RecC (1097 aa).

This sequence belongs to the RecC family. As to quaternary structure, heterotrimer of RecB, RecC and RecD. All subunits contribute to DNA-binding.

In terms of biological role, a helicase/nuclease that prepares dsDNA breaks (DSB) for recombinational DNA repair. Binds to DSBs and unwinds DNA via a highly rapid and processive ATP-dependent bidirectional helicase activity. Holoenzyme degrades any linearized DNA that is unable to undergo homologous recombination. In the holoenzyme this subunit recognizes the wild-type Chi sequence, and when added to isolated RecB increases its ATP-dependent helicase processivity. Unlike the case in E.coli, suppresses RecA-dependent homologous recombination, is instead required for single-strand annealing pathway repair of DSB. This Mycobacterium tuberculosis (strain CDC 1551 / Oshkosh) protein is RecBCD enzyme subunit RecC.